The following is a 384-amino-acid chain: Glucose-1-phosphate adenylyltransferase (384 aa).

Alpha-D-glucose 1-phosphate is bound by residues Tyr103, Gly168, 183–184 (EK), and Ser194.

This sequence belongs to the bacterial/plant glucose-1-phosphate adenylyltransferase family. Homotetramer.

It catalyses the reaction alpha-D-glucose 1-phosphate + ATP + H(+) = ADP-alpha-D-glucose + diphosphate. Its pathway is glycan biosynthesis; glycogen biosynthesis. Its function is as follows. Involved in the biosynthesis of ADP-glucose, a building block required for the elongation reactions to produce glycogen. Catalyzes the reaction between ATP and alpha-D-glucose 1-phosphate (G1P) to produce pyrophosphate and ADP-Glc. This chain is Glucose-1-phosphate adenylyltransferase, found in Fusobacterium nucleatum subsp. nucleatum (strain ATCC 25586 / DSM 15643 / BCRC 10681 / CIP 101130 / JCM 8532 / KCTC 2640 / LMG 13131 / VPI 4355).